A 134-amino-acid chain; its full sequence is Large-conductance mechanosensitive channel (134 aa).

Helical transmembrane passes span 16–36 and 76–96; these read VVDM…VSSF and GVFL…FIAV.

Belongs to the MscL family. Homopentamer.

Its subcellular location is the cell inner membrane. Its function is as follows. Channel that opens in response to stretch forces in the membrane lipid bilayer. May participate in the regulation of osmotic pressure changes within the cell. The chain is Large-conductance mechanosensitive channel from Thioalkalivibrio sulfidiphilus (strain HL-EbGR7).